Here is a 631-residue protein sequence, read N- to C-terminus: Putative meiotic phospholipase SPO1 (631 aa).

Positions 1 to 17 (MQKLLFVFSVLLTVVLA) are cleaved as a signal peptide. Positions 24–67 (QCPSSPLIREAKHELCPEETLYLKKKKIKTKNKLIQFLKSLTEA) are required for lipid-binding and function in meiosis. A PLA2c domain is found at 24–631 (QCPSSPLIRE…LQCFKDYCYS (608 aa)). 3 N-linked (GlcNAc...) asparagine glycosylation sites follow: Asn-233, Asn-293, and Asn-303. A helical membrane pass occupies residues 376 to 396 (FITATSSSIFNNVLIFIWNLA). Asn-500, Asn-536, Asn-560, Asn-563, and Asn-572 each carry an N-linked (GlcNAc...) asparagine glycan.

The protein belongs to the lysophospholipase family. In terms of assembly, interacts with SPO23. Post-translationally, glycosylated.

Its subcellular location is the endoplasmic reticulum membrane. The protein resides in the nucleus membrane. In terms of biological role, regulates spindle pole duplication in meiosis I, but not in mitosis. Required for meiosis I, meiosis II chromosome segregation and spore formation. Binds phosphatidylinositol (4)P mono- and polyphosphates. The protein is Putative meiotic phospholipase SPO1 (SPO1) of Saccharomyces cerevisiae (strain ATCC 204508 / S288c) (Baker's yeast).